A 37-amino-acid chain; its full sequence is Delta-amaurobitoxin-Pl1b (37 aa).

Intrachain disulfides connect Cys2–Cys18, Cys9–Cys23, Cys17–Cys33, and Cys25–Cys31. The residue at position 37 (Ser37) is a Serine amide.

This sequence belongs to the neurotoxin 07 (Beta/delta-agtx) family. 02 (aga-3) subfamily. In terms of tissue distribution, expressed by the venom gland.

Its subcellular location is the secreted. Functionally, insecticidal toxin. Binds to site 4 of insect voltage-gated sodium channel (Nav) and inhibits channel inactivation. In vivo, it lethal to lepidopteran larvae. Has no adverse affects when intracerebroventricularly injected in mice at a dose of 0.2 ug, but causes reversible paralysis of legs when injected intracerebroventricularly in mice at a dose of 2.0 ug. The chain is Delta-amaurobitoxin-Pl1b from Pireneitega luctuosa (Tangled nest spider).